The primary structure comprises 108 residues: UPF0102 protein Sama_3355 (108 aa).

It belongs to the UPF0102 family.

In Shewanella amazonensis (strain ATCC BAA-1098 / SB2B), this protein is UPF0102 protein Sama_3355.